We begin with the raw amino-acid sequence, 399 residues long: Elongation factor Tu (399 aa).

The tr-type G domain maps to 10 to 207 (KTHMNVGTIG…AVDSYFPDPV (198 aa)). A G1 region spans residues 19-26 (GHIDHGKT). 19 to 26 (GHIDHGKT) lines the GTP pocket. Thr-26 is a Mg(2+) binding site. The interval 60-64 (GITIN) is G2. Positions 81-84 (DCPG) are G3. GTP is bound by residues 81-85 (DCPGH) and 136-139 (NKVD). Residues 136-139 (NKVD) are G4. The G5 stretch occupies residues 174-176 (SAL).

Belongs to the TRAFAC class translation factor GTPase superfamily. Classic translation factor GTPase family. EF-Tu/EF-1A subfamily. As to quaternary structure, monomer.

It localises to the cytoplasm. The catalysed reaction is GTP + H2O = GDP + phosphate + H(+). Functionally, GTP hydrolase that promotes the GTP-dependent binding of aminoacyl-tRNA to the A-site of ribosomes during protein biosynthesis. The protein is Elongation factor Tu of Petrotoga mobilis (strain DSM 10674 / SJ95).